A 309-amino-acid chain; its full sequence is NADH-cytochrome b5 reductase 2 (309 aa).

The helical transmembrane segment at 3 to 23 (ILTAPVLIGVSIVVITVLYLF) threads the bilayer. The FAD-binding FR-type domain occupies 48–160 (SVKYPLPLIE…RGPNGLLVYN (113 aa)). Residues 140–170 (DNMKIGDTIDFRGPNGLLVYNGKGKFAIRPD) and 179–214 (KFKHVAMIAGGTGITPMLQLIRSITADSFDETVCSL) contribute to the FAD site.

This sequence belongs to the flavoprotein pyridine nucleotide cytochrome reductase family. The cofactor is FAD.

The protein localises to the membrane. The enzyme catalyses 2 Fe(III)-[cytochrome b5] + NADH = 2 Fe(II)-[cytochrome b5] + NAD(+) + H(+). Functionally, NADH-cytochrome b5 reductases are involved in desaturation and elongation of fatty acids, cholesterol biosynthesis and drug metabolism. In Danio rerio (Zebrafish), this protein is NADH-cytochrome b5 reductase 2 (cyb5r2).